A 190-amino-acid polypeptide reads, in one-letter code: Protein GrpE (190 aa).

Disordered regions lie at residues Met1–Ile22 and Glu170–Ser190. Residues Ala181–Ser190 are compositionally biased toward basic residues.

This sequence belongs to the GrpE family. In terms of assembly, homodimer.

Its subcellular location is the cytoplasm. Its function is as follows. Participates actively in the response to hyperosmotic and heat shock by preventing the aggregation of stress-denatured proteins, in association with DnaK and GrpE. It is the nucleotide exchange factor for DnaK and may function as a thermosensor. Unfolded proteins bind initially to DnaJ; upon interaction with the DnaJ-bound protein, DnaK hydrolyzes its bound ATP, resulting in the formation of a stable complex. GrpE releases ADP from DnaK; ATP binding to DnaK triggers the release of the substrate protein, thus completing the reaction cycle. Several rounds of ATP-dependent interactions between DnaJ, DnaK and GrpE are required for fully efficient folding. The sequence is that of Protein GrpE from Leptospira biflexa serovar Patoc (strain Patoc 1 / Ames).